Here is a 1048-residue protein sequence, read N- to C-terminus: Dyslexia-associated protein KIAA0319-like protein (1048 aa).

At 1–29 (MEKRLGVKPSPASWVLPGYCWQTSVKLPR) the chain is on the cytoplasmic side. A helical membrane pass occupies residues 30–50 (SLYLLYSFFCFSVLWLSTDAD). The 79-residue stretch at 49-127 (ADESRCQQGK…PFRTDSSNSM (79 aa)) folds into the MANSC domain. The Extracellular portion of the chain corresponds to 51–928 (ESRCQQGKTL…RDGDSNCEWS (878 aa)). 2 disordered regions span residues 198-218 (HGAM…LSPT) and 231-300 (SFTS…STSA). A compositionally biased stretch (polar residues) spans 231 to 241 (SFTSNHTTQTP). N-linked (GlcNAc...) asparagine glycosylation is present at asparagine 246. Low complexity-rich tracts occupy residues 247–261 (VSIH…SPVS) and 287–300 (ATPT…STSA). 5 consecutive PKD domains span residues 309–400 (VVSA…VKPE), 408–497 (VAVV…VNKA), 503–593 (VANA…VQPE), 599–687 (QADA…VKEE), and 693–784 (VAKI…VKPD). The N-linked (GlcNAc...) asparagine glycan is linked to asparagine 394. Residues 593-623 (ENNKPPQADAGPDKELTLPVDSTTLDGSKST) are disordered. Residues 929 to 949 (VLYVIIASFVIVVALGILSWT) traverse the membrane as a helical segment. The Cytoplasmic portion of the chain corresponds to 950–1048 (TICCCKRQKG…KSRSAREEIL (99 aa)). Threonine 973 carries the post-translational modification Phosphothreonine. A Phosphoserine modification is found at serine 977. The disordered stretch occupies residues 980 to 1007 (LKPTSRAGSKQKGPTLSSSLMHSESELD). Residues 985–994 (RAGSKQKGPT) show a composition bias toward polar residues. A phosphoserine mark is found at serine 1008 and serine 1030. The interval 1024 to 1048 (LYGQNGSVPNGQTPLKSRSAREEIL) is disordered. Residues 1027–1039 (QNGSVPNGQTPLK) are compositionally biased toward polar residues. Threonine 1036 carries the phosphothreonine modification.

As to quaternary structure, interacts with RTN4R. N-glycosylated.

It is found in the cytoplasmic granule membrane. The protein localises to the golgi apparatus membrane. It localises to the golgi apparatus. The protein resides in the trans-Golgi network membrane. Its subcellular location is the cell membrane. Its function is as follows. Possible role in axon guidance through interaction with RTN4R. Functionally, (Microbial infection) Acts as a receptor for adeno-associated virus and is involved in adeno-associated virus infection through endocytosis system. The chain is Dyslexia-associated protein KIAA0319-like protein from Mus musculus (Mouse).